Consider the following 147-residue polypeptide: Protein BUD31 homolog (147 aa).

A Nuclear localization signal motif is present at residues 8–12 (RRVRK).

This sequence belongs to the BUD31 (G10) family. As to quaternary structure, identified in the spliceosome C complex.

It localises to the nucleus. Functionally, involved in pre-mRNA splicing process. The protein is Protein BUD31 homolog of Caenorhabditis elegans.